We begin with the raw amino-acid sequence, 163 residues long: CDP-archaeol synthase (163 aa).

5 consecutive transmembrane segments (helical) span residues 4-24 (LLLG…APFI), 52-72 (LLLS…FLGI), 75-95 (IIIG…GAFI), 107-127 (APIL…ISFN), and 128-148 (VNLN…LHMF).

It belongs to the CDP-archaeol synthase family. Mg(2+) serves as cofactor.

It localises to the cell membrane. It carries out the reaction 2,3-bis-O-(geranylgeranyl)-sn-glycerol 1-phosphate + CTP + H(+) = CDP-2,3-bis-O-(geranylgeranyl)-sn-glycerol + diphosphate. Its pathway is membrane lipid metabolism; glycerophospholipid metabolism. Functionally, catalyzes the formation of CDP-2,3-bis-(O-geranylgeranyl)-sn-glycerol (CDP-archaeol) from 2,3-bis-(O-geranylgeranyl)-sn-glycerol 1-phosphate (DGGGP) and CTP. This reaction is the third ether-bond-formation step in the biosynthesis of archaeal membrane lipids. The chain is CDP-archaeol synthase from Sulfolobus acidocaldarius (strain ATCC 33909 / DSM 639 / JCM 8929 / NBRC 15157 / NCIMB 11770).